Here is a 141-residue protein sequence, read N- to C-terminus: uncharacterized protein (141 aa).

This is an uncharacterized protein from Methanocaldococcus jannaschii (strain ATCC 43067 / DSM 2661 / JAL-1 / JCM 10045 / NBRC 100440) (Methanococcus jannaschii).